A 226-amino-acid chain; its full sequence is ATP synthase subunit a (226 aa).

The next 7 helical transmembrane spans lie at 18-38 (FIIGFHTLLVAVILLILARYA), 44-64 (VVPSGIQNVFEFIISGIISFA), 79-99 (LAATIAFLVFFGNAIGIIPGF), 105-125 (SWSFTLVLALVVFFYYHFEGI), 137-157 (FMGPVWWLAPLMFPVEIISHF), 177-197 (FLLVMLMLAPWIVPVAPFAIL), and 202-222 (LLQAFVFMILTYVYIHGAVVV).

This sequence belongs to the ATPase A chain family. In terms of assembly, F-type ATPases have 2 components, CF(1) - the catalytic core - and CF(0) - the membrane proton channel. CF(1) has five subunits: alpha(3), beta(3), gamma(1), delta(1), epsilon(1). CF(0) has three main subunits: a(1), b(2) and c(9-12). The alpha and beta chains form an alternating ring which encloses part of the gamma chain. CF(1) is attached to CF(0) by a central stalk formed by the gamma and epsilon chains, while a peripheral stalk is formed by the delta and b chains.

It localises to the cell inner membrane. Functionally, key component of the proton channel; it plays a direct role in the translocation of protons across the membrane. This chain is ATP synthase subunit a, found in Helicobacter hepaticus (strain ATCC 51449 / 3B1).